Reading from the N-terminus, the 329-residue chain is Glutamyl-Q tRNA(Asp) synthetase (329 aa).

L-glutamate is bound by residues 8–12 (RLAPS) and Glu-44. Residues 11-21 (PSPTGAQHLGN) carry the 'HIGH' region motif. Cys-100, Cys-102, Tyr-129, and Cys-133 together coordinate Zn(2+). L-glutamate-binding residues include Tyr-196 and Arg-214. Residues 252–256 (RLAKR) carry the 'KMSKS' region motif. An ATP-binding site is contributed by Lys-255.

The protein belongs to the class-I aminoacyl-tRNA synthetase family. GluQ subfamily. Requires Zn(2+) as cofactor.

Catalyzes the tRNA-independent activation of glutamate in presence of ATP and the subsequent transfer of glutamate onto a tRNA(Asp). Glutamate is transferred on the 2-amino-5-(4,5-dihydroxy-2-cyclopenten-1-yl) moiety of the queuosine in the wobble position of the QUC anticodon. This is Glutamyl-Q tRNA(Asp) synthetase from Rhodopirellula baltica (strain DSM 10527 / NCIMB 13988 / SH1).